The following is a 338-amino-acid chain: POU domain, class 4, transcription factor 3 (338 aa).

The short motif at 56 to 65 is the POU-IV box element; that stretch reads RAEALAAVDI. The POU-specific domain occupies 179-256; sequence DVESDPRELE…VLQAWLEEAE (78 aa). Residues 274-333 constitute a DNA-binding region (homeobox); it reads RKRKRTSIAAPEKRSLEAYFAIQPRPSSEKIAAIAEKLDLKKNVVRVWFCNQRQKQKRMK.

The protein belongs to the POU transcription factor family. Class-4 subfamily. In terms of assembly, interacts with ISL1. As to expression, brain.

Its subcellular location is the nucleus. It is found in the cytoplasm. Functionally, acts as a transcriptional activator. Acts by binding to sequences related to the consensus octamer motif 5'-ATGCAAAT-3' in the regulatory regions of its target genes. Involved in the auditory system development, required for terminal differentiation of hair cells in the inner ear. This is POU domain, class 4, transcription factor 3 from Mus musculus (Mouse).